A 298-amino-acid chain; its full sequence is Transcription factor BOA (298 aa).

Disordered regions lie at residues Met1 to Ile26, Leu79 to Arg143, and Glu206 to Ser232. A compositionally biased stretch (acidic residues) spans Tyr10–Gly20. Basic and acidic residues predominate over residues Asp104–Gly113. Positions Ser122–Pro131 are enriched in acidic residues. Positions Thr138–Lys197 form a DNA-binding region, myb-like GARP. The span at Tyr209–Gln227 shows a compositional bias: polar residues.

The protein localises to the nucleus. Functionally, transcription factor that is a critical component of the regulatory circuit of the circadian clock. Binds to specific sites on CCA1 promoter leading to CCA1 activation. Is required for the rhythmic expression of other clock genes such as LHY, GI and APRR1/TOC1. The chain is Transcription factor BOA (BOA) from Arabidopsis thaliana (Mouse-ear cress).